A 119-amino-acid chain; its full sequence is uncharacterized protein (119 aa).

This is an uncharacterized protein from Orgyia pseudotsugata (Douglas-fir tussock moth).